A 332-amino-acid polypeptide reads, in one-letter code: Aquaporin-7-2 (332 aa).

The span at 1 to 40 (MSGQHQITEQPSGNPLSRTSTLIQEKPLTPTSSHAGTQKQ) shows a compositional bias: polar residues. Positions 1–46 (MSGQHQITEQPSGNPLSRTSTLIQEKPLTPTSSHAGTQKQPEAPRQ) are disordered. At 1-66 (MSGQHQITEQ…RHAIRKPMAE (66 aa)) the chain is on the cytoplasmic side. A helical membrane pass occupies residues 67–87 (FFGVALLIIFGAGSACQVVLS). The Extracellular segment spans residues 88–100 (TNPDVASSARGSF). Residues 101–121 (LSINFGWAIGIAMGVWVSGGI) form a helical membrane-spanning segment. The Cytoplasmic segment spans residues 122 to 144 (SGGHINPAITIAMATYRGFPWCK). An NPA 1 motif is present at residues 127-129 (NPA). Residues 145 to 165 (VPSYILAQVLGGVVGAALVYA) traverse the membrane as a helical segment. Over 166 to 199 (NYIHAIDVFEGGHHIRTEATASLFATYALPYMTQ) the chain is Extracellular. A helical membrane pass occupies residues 200-220 (ASCFFSEFLATAVLSMMVFAL). Over 221-230 (TDKRNHSPTN) the chain is Cytoplasmic. A helical membrane pass occupies residues 231 to 251 (GLLPFALFILFVGLGASLGME). Residues 252-283 (TAYALNPARDFGPRLFLAMAGYGKALFNYRSQ) are Extracellular-facing. The NPA 2 signature appears at 257-259 (NPA). A helical membrane pass occupies residues 284–304 (YWLWAPIIAPVLGAQAGGLLY). Over 305 to 332 (DTFLNDGDNSPIKWRCASSQEQQLAEVV) the chain is Cytoplasmic.

It belongs to the MIP/aquaporin (TC 1.A.8) family.

The protein localises to the membrane. It catalyses the reaction H2O(in) = H2O(out). Water channel required to facilitate the transport of water across membranes. Does not mediate the transport carbon dioxide across the membrane. In Laccaria bicolor (Bicoloured deceiver), this protein is Aquaporin-7-2.